The following is a 313-amino-acid chain: Aspartate carbamoyltransferase catalytic subunit (313 aa).

Arg-55 and Thr-56 together coordinate carbamoyl phosphate. L-aspartate is bound at residue Lys-83. The carbamoyl phosphate site is built by Arg-105, His-138, and Gln-141. Arg-171 and Arg-225 together coordinate L-aspartate. Carbamoyl phosphate-binding residues include Gly-266 and Pro-267.

This sequence belongs to the aspartate/ornithine carbamoyltransferase superfamily. ATCase family. Heterododecamer (2C3:3R2) of six catalytic PyrB chains organized as two trimers (C3), and six regulatory PyrI chains organized as three dimers (R2).

The catalysed reaction is carbamoyl phosphate + L-aspartate = N-carbamoyl-L-aspartate + phosphate + H(+). It participates in pyrimidine metabolism; UMP biosynthesis via de novo pathway; (S)-dihydroorotate from bicarbonate: step 2/3. In terms of biological role, catalyzes the condensation of carbamoyl phosphate and aspartate to form carbamoyl aspartate and inorganic phosphate, the committed step in the de novo pyrimidine nucleotide biosynthesis pathway. In Corynebacterium diphtheriae (strain ATCC 700971 / NCTC 13129 / Biotype gravis), this protein is Aspartate carbamoyltransferase catalytic subunit.